The chain runs to 139 residues: MMSYDAETGIAKVKCQSQSTCGACSARETCGTESLSELNGKRGEHIFTLETITPLRTDQMVEIGLEEKSMLFSALLMYIVQLFTLLVATLLSSYISENELIRAILIFMLTALSFVMVKRYTRKLGQQTEFQSVLLRVLF.

2 helical membrane passes run 71–91 and 97–117; these read LFSALLMYIVQLFTLLVATLL and ENELIRAILIFMLTALSFVMV.

It belongs to the RseC family.

The protein resides in the cell inner membrane. This is an uncharacterized protein from Haemophilus influenzae (strain ATCC 51907 / DSM 11121 / KW20 / Rd).